The sequence spans 479 residues: 6-phosphogluconate dehydrogenase, decarboxylating (479 aa).

NADP(+)-binding positions include 9–14, 32–34, 74–76, and N102; these read GLAVMG, NRT, and IQA. Residues N102 and 128–130 contribute to the substrate site; that span reads SGG. K182 acts as the Proton acceptor in catalysis. 185–186 is a substrate binding site; sequence HN. The active-site Proton donor is E189. Positions 190, 259, 286, 446, and 452 each coordinate substrate.

This sequence belongs to the 6-phosphogluconate dehydrogenase family. In terms of assembly, homodimer.

The catalysed reaction is 6-phospho-D-gluconate + NADP(+) = D-ribulose 5-phosphate + CO2 + NADPH. The protein operates within carbohydrate degradation; pentose phosphate pathway; D-ribulose 5-phosphate from D-glucose 6-phosphate (oxidative stage): step 3/3. Functionally, catalyzes the oxidative decarboxylation of 6-phosphogluconate to ribulose 5-phosphate and CO(2), with concomitant reduction of NADP to NADPH. This is 6-phosphogluconate dehydrogenase, decarboxylating (gnd) from Chlamydia pneumoniae (Chlamydophila pneumoniae).